A 445-amino-acid polypeptide reads, in one-letter code: MSHQHTTQTSGQGMLERVFKLREHGTTARTEVIAGFTTFLTMVYIVFVNPQILGVAGMDTSAVFVTTCLIAAFGSIMMGLFANLPVALAPAMGLNAFFAFVVVQAMGLPWQVGMGAIFWGAIGLLLLTIFRVRYWMIANIPVSLRVGITSGIGLFIGMMGLKNAGVIVANPETLVSIGNLTSHSVLLGILGFFIIAILASRNIHAAVLVSIVVTTLLGWMLGDVHYNGIVSAPPSVMTVVGHVDLAGSFNLGLAGVIFSFMLVNLFDSSGTLIGVTDKAGLADEKGKFPRMKQALYVDSISSVTGSFIGTSSVTAYIESSSGVSVGGRTGLTAVVVGLLFLLVIFLSPLAGMVPGYAAAGALIYVGVLMTSSLARVNWQDLTESVPAFITAVMMPFSFSITEGIALGFISYCVMKIGTGRLRDLSPCVIIVALLFILKIVFIDAH.

Residues 1-28 lie on the Cytoplasmic side of the membrane; it reads MSHQHTTQTSGQGMLERVFKLREHGTTA. A helical membrane pass occupies residues 29–52; sequence RTEVIAGFTTFLTMVYIVFVNPQI. At 53 to 62 the chain is on the periplasmic side; it reads LGVAGMDTSA. The chain crosses the membrane as a helical span at residues 63-81; the sequence is VFVTTCLIAAFGSIMMGLF. At 82–83 the chain is on the cytoplasmic side; sequence AN. A discontinuously helical membrane pass occupies residues 84–100; sequence LPVALAPAMGLNAFFAF. Residues 101–112 are Periplasmic-facing; it reads VVVQAMGLPWQV. The helical transmembrane segment at 113-132 threads the bilayer; that stretch reads GMGAIFWGAIGLLLLTIFRV. Residues 133–144 are Cytoplasmic-facing; sequence RYWMIANIPVSL. Residues 145–165 traverse the membrane as a helical segment; the sequence is RVGITSGIGLFIGMMGLKNAG. Residues 166–181 lie on the Periplasmic side of the membrane; sequence VIVANPETLVSIGNLT. A helical transmembrane segment spans residues 182–199; the sequence is SHSVLLGILGFFIIAILA. At 200–203 the chain is on the cytoplasmic side; that stretch reads SRNI. Residues 204 to 222 traverse the membrane as a helical segment; the sequence is HAAVLVSIVVTTLLGWMLG. The Periplasmic segment spans residues 223–250; that stretch reads DVHYNGIVSAPPSVMTVVGHVDLAGSFN. Residues 251–279 traverse the membrane as a helical segment; sequence LGLAGVIFSFMLVNLFDSSGTLIGVTDKA. Topologically, residues 280 to 292 are cytoplasmic; the sequence is GLADEKGKFPRMK. The chain crosses the membrane as a helical span at residues 293–308; it reads QALYVDSISSVTGSFI. At 309 to 310 the chain is on the periplasmic side; it reads GT. A discontinuously helical membrane pass occupies residues 311–326; the sequence is SSVTAYIESSSGVSVG. Residues 327–330 lie on the Cytoplasmic side of the membrane; the sequence is GRTG. Residues 331 to 345 form a helical membrane-spanning segment; it reads LTAVVVGLLFLLVIF. The Periplasmic portion of the chain corresponds to 346–356; that stretch reads LSPLAGMVPGY. A helical transmembrane segment spans residues 357 to 376; the sequence is AAAGALIYVGVLMTSSLARV. The Cytoplasmic portion of the chain corresponds to 377–381; the sequence is NWQDL. Positions 382–417 form an intramembrane region, discontinuously helical; that stretch reads TESVPAFITAVMMPFSFSITEGIALGFISYCVMKIG. The Cytoplasmic portion of the chain corresponds to 418–445; it reads TGRLRDLSPCVIIVALLFILKIVFIDAH.

This sequence belongs to the nucleobase:cation symporter-2 (NCS2) (TC 2.A.40) family. Azg-like subfamily.

The protein localises to the cell inner membrane. Internal adenine may inhibit transport. Its function is as follows. High-affinity transporter for adenine. The protein is Adenine permease AdeP (adeP) of Escherichia coli (strain K12).